Reading from the N-terminus, the 284-residue chain is Acetyl-coenzyme A carboxylase carboxyl transferase subunit beta (284 aa).

One can recognise a CoA carboxyltransferase N-terminal domain in the interval 25–284; the sequence is LWVKCPETGA…LCKILTKSVQ (260 aa).

It belongs to the AccD/PCCB family. Acetyl-CoA carboxylase is a heterohexamer composed of biotin carboxyl carrier protein (AccB), biotin carboxylase (AccC) and two subunits each of ACCase subunit alpha (AccA) and ACCase subunit beta (AccD).

It localises to the cytoplasm. It carries out the reaction N(6)-carboxybiotinyl-L-lysyl-[protein] + acetyl-CoA = N(6)-biotinyl-L-lysyl-[protein] + malonyl-CoA. The protein operates within lipid metabolism; malonyl-CoA biosynthesis; malonyl-CoA from acetyl-CoA: step 1/1. Its function is as follows. Component of the acetyl coenzyme A carboxylase (ACC) complex. Biotin carboxylase (BC) catalyzes the carboxylation of biotin on its carrier protein (BCCP) and then the CO(2) group is transferred by the transcarboxylase to acetyl-CoA to form malonyl-CoA. The protein is Acetyl-coenzyme A carboxylase carboxyl transferase subunit beta of Liberibacter asiaticus (strain psy62).